The following is a 629-amino-acid chain: (-)-alpha pinene synthase 1, chloroplastic (629 aa).

A chloroplast-targeting transit peptide spans 1–48 (MSPVSVISLPSDLCLPTSFIDRSGRELNPLHITIPNVAMRRQGKLMTR). The Mg(2+) site is built by Asp380, Asp384, and Asp532. Residues 380–384 (DDMYD) carry the DDXXD motif motif.

This sequence belongs to the terpene synthase family. Tpsd subfamily. It depends on Mg(2+) as a cofactor. Mn(2+) is required as a cofactor.

The protein resides in the plastid. It localises to the chloroplast. The enzyme catalyses (2E)-geranyl diphosphate = (1S,5S)-alpha-pinene + diphosphate. It carries out the reaction (2E)-geranyl diphosphate = (1S,5S)-beta-pinene + diphosphate. It participates in terpene metabolism; oleoresin biosynthesis. The protein operates within secondary metabolite biosynthesis; terpenoid biosynthesis. Monoterpene synthase (TPS) involved in the biosynthesis of monoterpene natural products included in conifer oleoresin secretions and volatile emissions; these compounds contribute to biotic and abiotic stress defense against herbivores and pathogens. Catalyzes the conversion of (2E)-geranyl diphosphate (GPP) to (-)-alpha-pinene and, to a lower extent, to (-)-beta-pinene. The polypeptide is (-)-alpha pinene synthase 1, chloroplastic (Pinus contorta (Shore pine)).